A 185-amino-acid chain; its full sequence is Large ribosomal subunit protein uL5 (185 aa).

Belongs to the universal ribosomal protein uL5 family. As to quaternary structure, part of the 50S ribosomal subunit; part of the 5S rRNA/L5/L18/L25 subcomplex. Contacts the 5S rRNA and the P site tRNA. Forms a bridge to the 30S subunit in the 70S ribosome.

Its function is as follows. This is one of the proteins that bind and probably mediate the attachment of the 5S RNA into the large ribosomal subunit, where it forms part of the central protuberance. In the 70S ribosome it contacts protein S13 of the 30S subunit (bridge B1b), connecting the 2 subunits; this bridge is implicated in subunit movement. Contacts the P site tRNA; the 5S rRNA and some of its associated proteins might help stabilize positioning of ribosome-bound tRNAs. This Phocaeicola vulgatus (strain ATCC 8482 / DSM 1447 / JCM 5826 / CCUG 4940 / NBRC 14291 / NCTC 11154) (Bacteroides vulgatus) protein is Large ribosomal subunit protein uL5.